Reading from the N-terminus, the 203-residue chain is Ras-related protein Rab5A (203 aa).

18-26 is a GTP binding site; that stretch reads GDVGTGKSS. Residues 40–48 carry the Effector region motif; it reads QESTIGAAF. GTP is bound by residues 66-70, 124-127, and 154-155; these read DTAGQ, NKAD, and SA. S-geranylgeranyl cysteine attachment occurs at residues cysteine 201 and cysteine 202.

It belongs to the small GTPase superfamily. Rab family. Interacts with VPS9A. Interacts with NSF and RBP-L. In terms of tissue distribution, highly expressed in roots. Expressed at low levels in shoots, flowers and grains.

The protein localises to the prevacuolar compartment membrane. The protein resides in the golgi apparatus membrane. Its subcellular location is the cell membrane. It is found in the protein storage vacuole membrane. Functionally, plays an important role in intracellular trafficking of seed storage proteins to the protein storage vacuoles (PSVs). Participates in the transport of the proglutelins from the Golgi apparatus to the PSVs in endosperm. Functions cooperatively with VPS9A to regulate post-Golgi dense vesicle-mediated transport of storage proteins to the type II protein bodies (PBII) protein storage vacuoles in developing endosperm. Involved in the maintenance of the general structural organization of the endomembrane system in developing endosperm. Binds GTP in vitro. Forms a quaternary complex with the two glutelin zipcode RNA-binding proteins RBP-L and RBP-P, and the membrane trafficking factor NSF. This quaternay complex carries glutelin mRNAs for active transport on endosomes to the cortical endoplasmic reticulum membrane, and enables endosome-mediated glutelin mRNA transport in endosperm cells. The sequence is that of Ras-related protein Rab5A from Oryza sativa subsp. japonica (Rice).